Consider the following 77-residue polypeptide: U8-lycotoxin-Ls1j (77 aa).

The N-terminal stretch at 1–20 is a signal peptide; sequence MKLIIFTGLILFAIVSLIEA. Residues 21–26 constitute a propeptide that is removed on maturation; sequence QANNEK.

The protein belongs to the neurotoxin 19 (CSTX) family. 08 (U8-Lctx) subfamily. Contains 4 disulfide bonds. In terms of tissue distribution, expressed by the venom gland.

The protein localises to the secreted. The polypeptide is U8-lycotoxin-Ls1j (Lycosa singoriensis (Wolf spider)).